Here is a 516-residue protein sequence, read N- to C-terminus: Replication factor C large subunit (516 aa).

Residue 44–51 participates in ATP binding; the sequence is GAPGVGKT. The disordered stretch occupies residues 421–516; that stretch reads RSEAVEAHAG…DGQAGLSEFM (96 aa). Over residues 454–467 the composition is skewed to basic and acidic residues; it reads VQSHKSAESGDDTV. The span at 479–496 shows a compositional bias: low complexity; the sequence is QSGASETASATESASDSD. Acidic residues predominate over residues 497 to 508; sequence ASTDTDADDDDG.

It belongs to the activator 1 small subunits family. RfcL subfamily. In terms of assembly, heteromultimer composed of small subunits (RfcS) and large subunits (RfcL).

Its function is as follows. Part of the RFC clamp loader complex which loads the PCNA sliding clamp onto DNA. This Haloquadratum walsbyi (strain DSM 16790 / HBSQ001) protein is Replication factor C large subunit.